The following is a 319-amino-acid chain: Polyprenyl transferase macG (319 aa).

9 helical membrane passes run 28-45 (AWLC…AAGM), 48-68 (VSLE…SVTA), 106-126 (AVVA…GTLG), 127-147 (PAVM…PFMK), 152-172 (FPQV…WVGI), 182-202 (ALPL…FYAT), 224-244 (VQIL…VTAL), 249-269 (SLIF…WHIL), and 289-309 (LGLY…VYDI).

Belongs to the UbiA prenyltransferase family. It depends on Mg(2+) as a cofactor.

Its subcellular location is the membrane. It functions in the pathway secondary metabolite biosynthesis; terpenoid biosynthesis. Functionally, polyprenyl transferase; part of the gene cluster that mediates the biosynthesis of macrophorins, isoprenoid epoxycyclohexenones containing cyclized drimane moieties. The first step of the pathway is the synthesis of 6-methylsalicylic acid (6-MSA) by the polyketide synthase macA. 6-MSA is then converted to m-cresol by the decarboxylase macB. The cytochrome P450 monooxygenase macC then catalyzes the oxidation of m-cresol to toluquinol. Epoxidation of toluquinol is then performed by the short chain dehydrogenase macD, with the help of macE, and a further prenylation by macG leads to 7-deacetoxyyanuthone A. The next step is the hydroxylation of C-22 of 7-deacetoxyyanuthone A by the cytochrome P450 monooxygenase macH to yield 22-deacetylyanuthone A. O-Mevalon transferase macI then attaches mevalon to the hydroxyl group of 22-deacetylyanuthone A to produce yanuthone E. The terpene cyclase macJ catalyzes the cyclization of 22-deacetylyanuthone A to macrophorin A. MacJ is also able to catalyze cyclization of yanuthone E and 7-deacetoxyyanuthone A to their corresponding macrophorins. The macJ products can be further modified by macH and macJ, as well as by the FAD-dependent monooxygenase macF, to produce additional macrophorins, including 4'-oxomacrophorin A, 4'-oxomacrophorin D and 4'-oxomacrophorin E. The chain is Polyprenyl transferase macG from Penicillium terrestre.